Here is a 369-residue protein sequence, read N- to C-terminus: Glycolate oxidase 1 (369 aa).

Residues 1-360 enclose the FMN hydroxy acid dehydrogenase domain; it reads MGEITNVMEY…TRKHIITESD (360 aa). Tyrosine 25 is a glyoxylate binding site. FMN contacts are provided by residues 78 to 80, serine 107, 128 to 130, and threonine 156; these read PTA and QLY. Tyrosine 130 lines the glyoxylate pocket. Arginine 165 contacts glyoxylate. Residues lysine 231 and serine 253 each contribute to the FMN site. Residues histidine 255 and arginine 258 each contribute to the glyoxylate site. The Proton acceptor role is filled by histidine 255. FMN contacts are provided by residues 286–290 and 309–310; these read DGGVR and GR.

It belongs to the FMN-dependent alpha-hydroxy acid dehydrogenase family. Homotetramer. FMN is required as a cofactor.

The protein localises to the peroxisome. It catalyses the reaction glycolate + O2 = glyoxylate + H2O2. Its pathway is photosynthesis; photorespiration; glycine from 2-phosphoglycolate: step 2/3. Functionally, catalyzes the oxidation of glycolate to glyoxylate, with a reduction of O2 to H2O2. Is an essential enzyme in photorespiration in plants. Photorespiration plays a vital role in C4 photosynthesis in Z.mays and is essential for maize seedling development and maintaining low (non-toxic) levels of glycolate. This Zea mays (Maize) protein is Glycolate oxidase 1.